The chain runs to 950 residues: Translation initiation factor IF-2 (950 aa).

Composition is skewed to basic and acidic residues over residues K128–A158, A165–K186, K200–R234, and N291–R312. The interval K128–T354 is disordered. Composition is skewed to polar residues over residues N322–Q336 and Y343–A353. The region spanning E448–K619 is the tr-type G domain. A G1 region spans residues G457–T464. Residue G457 to T464 participates in GTP binding. The tract at residues G482–H486 is G2. Residues D503–G506 are G3. GTP-binding positions include D503–H507 and N557–D560. The interval N557–D560 is G4. The G5 stretch occupies residues S595 to K597.

Belongs to the TRAFAC class translation factor GTPase superfamily. Classic translation factor GTPase family. IF-2 subfamily.

Its subcellular location is the cytoplasm. In terms of biological role, one of the essential components for the initiation of protein synthesis. Protects formylmethionyl-tRNA from spontaneous hydrolysis and promotes its binding to the 30S ribosomal subunits. Also involved in the hydrolysis of GTP during the formation of the 70S ribosomal complex. The protein is Translation initiation factor IF-2 of Lactococcus lactis subsp. cremoris (strain MG1363).